Consider the following 314-residue polypeptide: Dihydroorotate dehydrogenase (fumarate) (314 aa).

Substrate-binding positions include lysine 46, 70-74, and asparagine 130; that span reads NSMGL. FMN is bound at residue 46-47; sequence KS. Asparagine 130 is a binding site for FMN. Active-site nucleophile residues include serine 132 and cysteine 133. Positions 167 and 195 each coordinate FMN. Residue 196 to 197 coordinates substrate; it reads NS. FMN contacts are provided by residues glycine 224, 252-253, and 274-275; these read GG and GT.

The protein belongs to the dihydroorotate dehydrogenase family. Type 1 subfamily. Homodimer. FMN is required as a cofactor.

The protein resides in the cytoplasm. The catalysed reaction is (S)-dihydroorotate + fumarate = orotate + succinate. Its pathway is pyrimidine metabolism; UMP biosynthesis via de novo pathway. Its function is as follows. Catalyzes the conversion of dihydroorotate to orotate with fumarate as the electron acceptor. This Saccharomyces mikatae (Yeast) protein is Dihydroorotate dehydrogenase (fumarate) (URA1).